The primary structure comprises 327 residues: Inactive peptidyl-prolyl cis-trans isomerase FKBP6 (327 aa).

The tract at residues 1–20 is disordered; the sequence is MSVFSRLRNGIPPSRDDCQS. The region spanning 54–143 is the PPIase FKBP-type domain; the sequence is DASVLVKYSG…LFEIELIDFL (90 aa). TPR repeat units lie at residues 171–204, 219–252, and 253–286; these read AATEREFGNYLFRQNRFCDAKVRYKRALLLLHRR, LLVLLNLSFVYLKLDRPAMALRYGEQALLIDKRN, and AKALFRCGQACLLLTEYEQARDFLVRAQKEQPCN.

It belongs to the FKBP6 family. As to quaternary structure, interacts with HSP72/HSPA2 and CLTC. Interacts with GAPDH; leading to inhibit GAPDH catalytic activity. Interacts (via TPR repeats) with HSP90.

The protein localises to the cytoplasm. It is found in the cytosol. The protein resides in the nucleus. Its subcellular location is the chromosome. In terms of biological role, co-chaperone required during spermatogenesis to repress transposable elements and prevent their mobilization, which is essential for the germline integrity. Acts via the piRNA metabolic process, which mediates the repression of transposable elements during meiosis by forming complexes composed of piRNAs and Piwi proteins and govern the methylation and subsequent repression of transposons. Acts as a co-chaperone via its interaction with HSP90 and is required for the piRNA amplification process, the secondary piRNA biogenesis. May be required together with HSP90 in removal of 16 nucleotide ping-pong by-products from Piwi complexes, possibly facilitating turnover of Piwi complexes. This chain is Inactive peptidyl-prolyl cis-trans isomerase FKBP6 (Fkbp6), found in Rattus norvegicus (Rat).